The sequence spans 522 residues: TNF receptor-associated factor 6 (522 aa).

An interaction with TAX1BP1 region spans residues 1–354 (MSLLNCENSC…EAQQCNGIYI (354 aa)). An RING-type zinc finger spans residues 70–109 (CPICLMALREAVQTPCGHRFCKACIIKSIRDAGHKCPVDN). Residue lysine 124 forms a Glycyl lysine isopeptide (Lys-Gly) (interchain with G-Cter in SUMO); alternate linkage. Lysine 124 is covalently cross-linked (Glycyl lysine isopeptide (Lys-Gly) (interchain with G-Cter in ubiquitin); alternate). A Glycyl lysine isopeptide (Lys-Gly) (interchain with G-Cter in SUMO) cross-link involves residue lysine 142. TRAF-type zinc fingers lie at residues 150 to 202 (DHQA…EDKE) and 203 to 259 (IHDQ…NHLA). Residues 288-348 (YISEVRNFQE…DKVAEIEAQQ (61 aa)) are a coiled coil. Lysine 319 is covalently cross-linked (Glycyl lysine isopeptide (Lys-Gly) (interchain with G-Cter in ubiquitin)). One can recognise an MATH domain in the interval 350–499 (NGIYIWKIGN…DDTLLVRCEV (150 aa)). Residues 355–522 (WKIGNFGMHL…FQPRSTDAGV (168 aa)) form an interaction with TANK region. Lysine 453 participates in a covalent cross-link: Glycyl lysine isopeptide (Lys-Gly) (interchain with G-Cter in SUMO).

This sequence belongs to the TNF receptor-associated factor family. A subfamily. As to quaternary structure, homotrimer. Homooligomer. N-terminal region is dimeric while C-terminal region is trimeric; maybe providing a mode of oligomerization. Upon IL1B treatment, forms a complex with PELI1, IRAK1, IRAK4 and MYD88; this complex recruits MAP3K7/TAK1, TAB1 and TAB2 to mediate NF-kappa-B activation. Direct binding of SMAD6 to PELI1 prevents the complex formation and hence negatively regulates IL1R-TLR signaling and eventually NF-kappa-B-mediated gene expression. Binds to TNFRSF5/CD40 and TNFRSF11A/RANK. Associates with NGFR, TNFRSF17, IRAK2, IRAK3, RIPK2, MAP3K1, MAP3K5, MAP3K14, CSK, TRAF, TRAF-interacting protein TRIP and TNF receptor associated protein TDP2. Interacts with IL17R. Interacts with SQSTM1 bridging NTRK1 and NGFR. Forms a ternary complex with SQSTM1 and PRKCZ. Interacts with PELI2 and PELI3. Binds UBE2V1. Interacts with TAX1BP1; this interaction mediates deubiquitination of TRAF6 and inhibition of NF-kappa-B activation. Interacts with ZNF675. Interacts with ARRB1 and ARRB2. Interacts with MAP3K7 and TAB1/MAP3K7IP1; during IL-1 signaling. Interacts with UBE2N. Interacts with TGFBR1, HDAC1 and RANGAP1. Interacts with AKT1, AKT2 and AKT3. Interacts (via TRAF domains) with NUMBL (via C-terminal). Interacts with RBCK1. Interacts with LIMD1 (via LIM domains). Interacts with RSAD2/viperin. Interacts (via C-terminus) with EIF2AK2/PKR (via the kinase catalytic domain). Interacts with ZFAND5. Interacts with IL1RL1. Interacts with TRAFD1. Interacts with AJUBA. Interacts with MAVS/IPS1. Interacts (via TRAF domains) with DYNC2I2 (via WD domains). Interacts with IFIT3 (via N-terminus). Interacts with TICAM2. Interacts with CARD14. Interacts with CD40 and MAP3K8; the interaction is required for ERK activation. Interacts with TICAM1 and this interaction is enhanced in the presence of WDFY1. Interacts with TANK; this interaction increases in response to DNA damage. Interacts with USP10; this interaction increases in response to DNA damage. Interacts with ZC3H12A; this interaction increases in response to DNA damage and is stimulated by TANK. Interacts with WDFY3. Interacts with TRIM13. Interacts with GPS2. Interacts (via C-terminus) with SASH1. Interacts with LRRC19. Interacts with IL17RA and TRAF3IP2. Interacts with TOMM70. Interacts with AMBRA1; interaction is required to mediate 'Lys-63'-linked ubiquitination of ULK1. Interacts with CRBN; this interaction inhibits TLR4-mediated signaling by preventing TRAF6-mediated ubiquitination of ECSIT. Sumoylated on Lys-124, Lys-142 and Lys-453 with SUMO1. Post-translationally, polyubiquitinated on Lys-124 by TRAF3IP2; after cell stimulation with IL17A. Polyubiquitinated on Lys-124; after cell stimulation with IL1B or TGFB. This ligand-induced cell stimulation leads to dimerization/oligomerization of TRAF6 molecules, followed by auto-ubiquitination which involves UBE2N and UBE2V1 and leads to TRAF6 activation. This 'Lys-63' site-specific poly-ubiquitination appears to be associated with the activation of signaling molecules. Endogenous autoubiquitination occurs only for the cytoplasmic form. Deubiquitinated by USP10 in a TANK-dependent manner, leading to the negative regulation of NF-kappaB signaling upon DNA damage. LRRC19 induces 'Lys-63' ubiquitination. Ubiquitinated at Lys-319 by the SCF(FBXL2) complex, leading to its degradation by the proteasome. In terms of processing, (Microbial infection) Deubiquitinated by Epstein-Barr virus BPLF1 on both 'Lys-48' and 'Lys-63'-linked ubiquitin chains; leading to NF-kappa-B signaling inhibition. As to expression, expressed in heart, brain, placenta, lung, liver, skeletal muscle, kidney and pancreas.

The protein localises to the cytoplasm. Its subcellular location is the cell cortex. It is found in the nucleus. It localises to the lipid droplet. It carries out the reaction S-ubiquitinyl-[E2 ubiquitin-conjugating enzyme]-L-cysteine + [acceptor protein]-L-lysine = [E2 ubiquitin-conjugating enzyme]-L-cysteine + N(6)-ubiquitinyl-[acceptor protein]-L-lysine.. Its pathway is protein modification; protein ubiquitination. Its function is as follows. E3 ubiquitin ligase that, together with UBE2N and UBE2V1, mediates the synthesis of 'Lys-63'-linked-polyubiquitin chains conjugated to proteins, such as ECSIT, IKBKG, IRAK1, AKT1 and AKT2. Also mediates ubiquitination of free/unanchored polyubiquitin chain that leads to MAP3K7 activation. Leads to the activation of NF-kappa-B and JUN. Seems to also play a role in dendritic cells (DCs) maturation and/or activation. Represses c-Myb-mediated transactivation, in B-lymphocytes. Adapter protein that seems to play a role in signal transduction initiated via TNF receptor, IL-1 receptor and IL-17 receptor. Regulates osteoclast differentiation by mediating the activation of adapter protein complex 1 (AP-1) and NF-kappa-B, in response to RANK-L stimulation. Together with MAP3K8, mediates CD40 signals that activate ERK in B-cells and macrophages, and thus may play a role in the regulation of immunoglobulin production. Acts as a regulator of the JNK and NF-kappa-B signaling pathways by initiating assembly of heterotypic 'Lys-63'-/'Lys-48'-linked branched ubiquitin chains that are then recognized by TAB2: TRAF6 catalyzes initial 'Lys-63'-linked-polyubiquitin chains that are then branched via 'Lys-48'-linked polyubiquitin by HUWE1. 'Lys-63'-/'Lys-48'-linked branched ubiquitin chains protect 'Lys-63'-linkages from CYLD deubiquitination. Participates also in the TCR signaling by ubiquitinating LAT. The protein is TNF receptor-associated factor 6 (TRAF6) of Homo sapiens (Human).